A 969-amino-acid chain; its full sequence is Leucine--tRNA ligase (969 aa).

Residues 1–23 (MTESPTTSPATGSGAAAPDSDAP) are disordered. The 'HIGH' region signature appears at 78 to 89 (PYPSGEGLHVGH). The short motif at 737 to 741 (KIGKS) is the 'KMSKS' region element. Residue Lys740 coordinates ATP.

It belongs to the class-I aminoacyl-tRNA synthetase family.

Its subcellular location is the cytoplasm. The enzyme catalyses tRNA(Leu) + L-leucine + ATP = L-leucyl-tRNA(Leu) + AMP + diphosphate. This Mycobacterium avium (strain 104) protein is Leucine--tRNA ligase.